Here is a 166-residue protein sequence, read N- to C-terminus: Large ribosomal subunit protein bL9 (166 aa).

The protein belongs to the bacterial ribosomal protein bL9 family.

Its function is as follows. Binds to the 23S rRNA. In Psychrobacter arcticus (strain DSM 17307 / VKM B-2377 / 273-4), this protein is Large ribosomal subunit protein bL9.